The following is a 284-amino-acid chain: ATP synthase subunit beta, chloroplastic (284 aa).

It belongs to the ATPase alpha/beta chains family. In terms of assembly, F-type ATPases have 2 components, CF(1) - the catalytic core - and CF(0) - the membrane proton channel. CF(1) has five subunits: alpha(3), beta(3), gamma(1), delta(1), epsilon(1). CF(0) has four main subunits: a(1), b(1), b'(1) and c(9-12).

The protein resides in the plastid. It is found in the chloroplast thylakoid membrane. The catalysed reaction is ATP + H2O + 4 H(+)(in) = ADP + phosphate + 5 H(+)(out). Its function is as follows. Produces ATP from ADP in the presence of a proton gradient across the membrane. The catalytic sites are hosted primarily by the beta subunits. This chain is ATP synthase subunit beta, chloroplastic (atpB), found in Asplenium nidus (Bird's nest fern).